The following is a 163-amino-acid chain: Nucleotide-binding protein BCG9842_B4128 (163 aa).

This sequence belongs to the YajQ family.

Its function is as follows. Nucleotide-binding protein. The sequence is that of Nucleotide-binding protein BCG9842_B4128 from Bacillus cereus (strain G9842).